The primary structure comprises 194 residues: Transmembrane protein 212 (194 aa).

5 consecutive transmembrane segments (helical) span residues 11–31 (ILVTLGILSVCSGVIAFFPVF), 44–64 (IACPIWNGALAITTGVLLLLA), 76–96 (ATFTFVILSIMGCPLHFAIAL), 99–119 (ALLGPYCFYSFSGIAGTNYLG), and 148–168 (LQALDLCLSFTLLCTSLTVFI).

It localises to the membrane. This Homo sapiens (Human) protein is Transmembrane protein 212 (TMEM212).